Reading from the N-terminus, the 517-residue chain is 2-isopropylmalate synthase (517 aa).

The 264-residue stretch at 5–268 (IIIFDTTLRD…DTRINTQEIH (264 aa)) folds into the Pyruvate carboxyltransferase domain. 4 residues coordinate Mn(2+): aspartate 14, histidine 202, histidine 204, and asparagine 238. The tract at residues 393 to 517 (SLDVITSQTI…ADLKSHKISQ (125 aa)) is regulatory domain.

Belongs to the alpha-IPM synthase/homocitrate synthase family. LeuA type 1 subfamily. In terms of assembly, homodimer. Requires Mn(2+) as cofactor.

The protein resides in the cytoplasm. The enzyme catalyses 3-methyl-2-oxobutanoate + acetyl-CoA + H2O = (2S)-2-isopropylmalate + CoA + H(+). It participates in amino-acid biosynthesis; L-leucine biosynthesis; L-leucine from 3-methyl-2-oxobutanoate: step 1/4. In terms of biological role, catalyzes the condensation of the acetyl group of acetyl-CoA with 3-methyl-2-oxobutanoate (2-ketoisovalerate) to form 3-carboxy-3-hydroxy-4-methylpentanoate (2-isopropylmalate). The sequence is that of 2-isopropylmalate synthase from Histophilus somni (strain 129Pt) (Haemophilus somnus).